The following is a 212-amino-acid chain: Regulatory protein RecX (212 aa).

This sequence belongs to the RecX family.

Its subcellular location is the cytoplasm. Its function is as follows. Modulates RecA activity. The polypeptide is Regulatory protein RecX (Clostridium botulinum (strain Alaska E43 / Type E3)).